Here is a 219-residue protein sequence, read N- to C-terminus: Claudin-3 (219 aa).

At 1-8 (MSMGLEIT) the chain is on the cytoplasmic side. Residues 9–29 (GTSLAVLGWLCTIVCCALPMW) form a helical membrane-spanning segment. Residues 30–80 (RVSAFIGSSIITAQITWEGLWMNCVVQSTGQMQCKMYDSLLALPQDLQAAR) lie on the Extracellular side of the membrane. Residues 81-101 (ALIVVSILLAAFGLLVALVGA) traverse the membrane as a helical segment. Residues 102-115 (QCTNCVQDETAKAK) are Cytoplasmic-facing. Residues 116-136 (ITIVAGVLFLLAAVLTLVPVS) traverse the membrane as a helical segment. Residues 137-161 (WSANTIIRDFYNPLVPEAQKREMGT) lie on the Extracellular side of the membrane. A helical membrane pass occupies residues 162–182 (GLYVGWAAAALQLLGGALLCC). Topologically, residues 183–219 (SCPPREKYAPTKILYSAPRSTGPGTGTGTAYDRKDYV) are cytoplasmic. A Phosphotyrosine modification is found at Tyr197. Ser198 carries the phosphoserine modification. The interval 218 to 219 (YV) is interactions with TJP1, TJP2 and TJP3.

Belongs to the claudin family. As to quaternary structure, can form homo- and heteropolymers with other CLDN. Homopolymers interact with CLDN1 and CLDN2 homopolymers. Interacts in cis (within the same plasma membrane) with CLDN19. Directly interacts with TJP1/ZO-1, TJP2/ZO-2 and TJP3/ZO-3.

The protein localises to the cell junction. It is found in the tight junction. It localises to the cell membrane. Its function is as follows. Plays a major role in tight junction-specific obliteration of the intercellular space, through calcium-independent cell-adhesion activity. The sequence is that of Claudin-3 (Cldn3) from Rattus norvegicus (Rat).